An 877-amino-acid chain; its full sequence is Ewing's tumor-associated antigen 1 homolog (877 aa).

Positions 1-82 (MQLKDGGTGM…GRSPRGKETP (82 aa)) are disordered. Residues 56-65 (AGTRSARRAQ) show a composition bias toward basic residues. A Glycyl lysine isopeptide (Lys-Gly) (interchain with G-Cter in SUMO2) cross-link involves residue lysine 87. Residues 107–113 (IFWDQNS) carry the ATR-activation domain (AAD) motif. Coiled-coil stretches lie at residues 185–213 (KTKN…IQEQ) and 306–335 (AFLN…LLTE). Residues lysine 416 and lysine 444 each participate in a glycyl lysine isopeptide (Lys-Gly) (interchain with G-Cter in SUMO2) cross-link. The disordered stretch occupies residues 450 to 479 (PSKTRNGELRNAGEHRFSSHPGDESRKVPF). Basic and acidic residues predominate over residues 454 to 476 (RNGELRNAGEHRFSSHPGDESRK). At serine 467 the chain carries Phosphoserine. Lysine 510 participates in a covalent cross-link: Glycyl lysine isopeptide (Lys-Gly) (interchain with G-Cter in SUMO2). Residues 607–622 (GEVDDDLFCQACDDIE) carry the RBM1 motif motif. Disordered regions lie at residues 626-664 (QQEN…PSKH) and 818-877 (ANQQ…ISLP). The segment covering 637 to 662 (SVSYTSTRGSRSSSTASKQASQSAPS) has biased composition (low complexity). Polar residues predominate over residues 818 to 833 (ANQQQSSINYSESLKP). Basic and acidic residues predominate over residues 840–859 (ERNRKYSPEEIQRKRQEALV). The short motif at 843–865 (RKYSPEEIQRKRQEALVRRKAKA) is the RBM2 motif element. Over residues 868–877 (TVQSAPISLP) the composition is skewed to polar residues.

As to quaternary structure, interacts (via RBM1 motif) with RPA1. Interacts (via RBM2 motif) with RPA2. Interacts (via the ATR-activation domain motif) with ATR. Phosphorylated by ATR.

Its subcellular location is the nucleus. Functionally, replication stress response protein that accumulates at DNA damage sites and promotes replication fork progression and integrity. Recruited to stalled replication forks via interaction with the RPA complex and directly stimulates ATR kinase activity independently of TOPBP1. Probably only regulates a subset of ATR targets. The chain is Ewing's tumor-associated antigen 1 homolog from Mus musculus (Mouse).